We begin with the raw amino-acid sequence, 88 residues long: Small ribosomal subunit protein bS18 (88 aa).

Positions 1–26 (MAFAQSGGAGGGGGQRRPFFRRRKTC) are disordered.

The protein belongs to the bacterial ribosomal protein bS18 family. As to quaternary structure, part of the 30S ribosomal subunit. Forms a tight heterodimer with protein bS6.

Binds as a heterodimer with protein bS6 to the central domain of the 16S rRNA, where it helps stabilize the platform of the 30S subunit. In Xanthobacter autotrophicus (strain ATCC BAA-1158 / Py2), this protein is Small ribosomal subunit protein bS18.